The following is a 241-amino-acid chain: Carboxy-S-adenosyl-L-methionine synthase (241 aa).

S-adenosyl-L-methionine-binding positions include tyrosine 38, 63–65 (GCS), 88–89 (DN), 116–117 (DI), asparagine 131, and arginine 198.

This sequence belongs to the class I-like SAM-binding methyltransferase superfamily. Cx-SAM synthase family. As to quaternary structure, homodimer.

The catalysed reaction is prephenate + S-adenosyl-L-methionine = carboxy-S-adenosyl-L-methionine + 3-phenylpyruvate + H2O. Its function is as follows. Catalyzes the conversion of S-adenosyl-L-methionine (SAM) to carboxy-S-adenosyl-L-methionine (Cx-SAM). This Histophilus somni (strain 2336) (Haemophilus somnus) protein is Carboxy-S-adenosyl-L-methionine synthase.